The primary structure comprises 237 residues: Golgi to ER traffic protein 1 (237 aa).

Over 1 to 4 the chain is Lumenal; it reads MDSG. Residues 5–24 form a helical membrane-spanning segment; the sequence is GWIVYCCIFFILLGKVLEYT. Topologically, residues 25 to 110 are cytoplasmic; the sequence is SSYQDKWFTK…SSKKVFGRVK (86 aa). The stretch at 40-99 forms a coiled coil; that stretch reads EARKLNSQYHELLSERLRLQEENHSISAQDNYARWTKNNRKLGELDKKLGTIRDKLQETN. Residues 111 to 131 form a helical membrane-spanning segment; it reads LIGLTIPFWILKIWQRSHVVY. Over 132 to 176 the chain is Lumenal; that stretch reads HFPKQDLFPKLVTGVWARGWLYLALGPLQYLRNGSLNIQDYAPHG. Residues 177-193 traverse the membrane as a helical segment; it reads VSLGIWIWALQATINTL. At 194–237 the chain is on the cytoplasmic side; the sequence is EFLVKQVILEKPVSPPPQKSKSATKAETKRPEKLEITDDKVELD. A disordered region spans residues 205-237; the sequence is PVSPPPQKSKSATKAETKRPEKLEITDDKVELD. Residues 217–237 show a composition bias toward basic and acidic residues; that stretch reads TKAETKRPEKLEITDDKVELD.

The protein belongs to the WRB/GET1 family. Component of the Golgi to ER traffic (GET) complex, which is composed of GET1, GET2 and GET3. Within the complex, GET1 and GET2 form a heterotetramer which is stabilized by phosphatidylinositol binding and which binds to the GET3 homodimer.

The protein localises to the endoplasmic reticulum membrane. It is found in the golgi apparatus membrane. Required for the post-translational delivery of tail-anchored (TA) proteins to the endoplasmic reticulum. Together with GET2, acts as a membrane receptor for soluble GET3, which recognizes and selectively binds the transmembrane domain of TA proteins in the cytosol. The GET complex cooperates with the HDEL receptor ERD2 to mediate the ATP-dependent retrieval of resident ER proteins that contain a C-terminal H-D-E-L retention signal from the Golgi to the ER. The sequence is that of Golgi to ER traffic protein 1 from Zygosaccharomyces rouxii (strain ATCC 2623 / CBS 732 / NBRC 1130 / NCYC 568 / NRRL Y-229).